The sequence spans 251 residues: Triosephosphate isomerase (251 aa).

Position 9–11 (9–11 (NWK)) interacts with substrate. His-96 (electrophile) is an active-site residue. The active-site Proton acceptor is Glu-168. Substrate-binding positions include Gly-174, Ser-214, and 235–236 (GG).

The protein belongs to the triosephosphate isomerase family. Homodimer.

It localises to the cytoplasm. The enzyme catalyses D-glyceraldehyde 3-phosphate = dihydroxyacetone phosphate. The protein operates within carbohydrate biosynthesis; gluconeogenesis. It participates in carbohydrate degradation; glycolysis; D-glyceraldehyde 3-phosphate from glycerone phosphate: step 1/1. Its function is as follows. Involved in the gluconeogenesis. Catalyzes stereospecifically the conversion of dihydroxyacetone phosphate (DHAP) to D-glyceraldehyde-3-phosphate (G3P). This chain is Triosephosphate isomerase, found in Porphyromonas gingivalis (strain ATCC BAA-308 / W83).